A 368-amino-acid chain; its full sequence is MEAIAKRLDACQEQLLELYEENSTDLHKHVLHWKCMRHESVLLYKAKQMGLSHIGMQVVPPLKVSEAKGHNAIEMQMHLESLLRTEYSMEPWTLQETSYEMWQTPPKRCFKKRGKTVEVKFDGCANNTMDYVVWTDVYVQDNDTWVKVHSMVDAKGIYYTCGQFKTYYVNFVKEAEKYGSTKHWEVCYGSTVICSPASVSSTTQEVSIPESTTYTPAQTSTLVSSSTKEDAVQTPPRKRARGVQQSPCNALCVAHIGPVDSGNHNLITNNHDQHQRRNNSNSSATPIVQFQGESNCLKCFRYRLNDRHRHLFDLISSTWHWASSKAPHKHAIVTVTYDSEEQRQQFLDVVKIPPTISHKLGFMSLHLL.

The transactivation domain stretch occupies residues 1–200; that stretch reads MEAIAKRLDA…TVICSPASVS (200 aa). The segment covering 208–226 has biased composition (polar residues); sequence IPESTTYTPAQTSTLVSSS. A disordered region spans residues 208 to 241; that stretch reads IPESTTYTPAQTSTLVSSSTKEDAVQTPPRKRAR. Residues 284-368 form a DNA-binding domain region; it reads ATPIVQFQGE…KLGFMSLHLL (85 aa).

This sequence belongs to the papillomaviridae E2 protein family. As to quaternary structure, binds DNA as homodimer. Interacts with protein E1; this interaction greatly increases E1 DNA-binding activity. Interacts with protein L1; this interaction enhances E2-dependent replication and transcription activation. Interacts with protein L2; this interaction inhibits E2 transcriptional activity but not DNA replication function E2. Interacts with protein E7; this interaction inhibits E7 oncogenic activity. Interacts with host TAF1; this interaction modulates E2-dependent transcriptional regulation. Interacts with host BRD4; this interaction mediates E2 transcriptional activation function. Additionally, the interaction with host BRD4 on mitotic chromosomes mediates tethering of the viral genome. Interacts with host TOPBP1; this interaction is required for optimal viral DNA replication. Phosphorylated.

Its subcellular location is the host nucleus. Functionally, plays a role in the initiation of viral DNA replication. A dimer of E2 interacts with a dimer of E1 in order to improve specificity of E1 DNA binding activity. Once the complex recognizes and binds DNA at specific sites, the E2 dimer is removed from DNA. E2 also regulates viral transcription through binding to the E2RE response element (5'-ACCNNNNNNGGT-3') present in multiple copies in the regulatory regions of the viral genome. Activates or represses transcription depending on E2RE's position with regards to proximal promoter elements including the TATA-box. Repression occurs by sterically hindering the assembly of the transcription initiation complex. The chain is Regulatory protein E2 from Human papillomavirus type 6b.